The following is a 375-amino-acid chain: Trans-enoyl reductase iccB (375 aa).

48–51 lines the NADP(+) pocket; the sequence is VDAK. 143-150 provides a ligand contact to substrate; sequence AAVATVGL. NADP(+)-binding positions include 204–207, Y222, and 269–270; these read SSAS and LD. 289–293 provides a ligand contact to substrate; that stretch reads TYSQF. 358–359 serves as a coordination point for NADP(+); the sequence is IK.

The protein belongs to the zinc-containing alcohol dehydrogenase family. In terms of assembly, monomer.

The catalysed reaction is N-[(4E,6E,10S,12Z,14E)-6,10-dimethyl-3-oxohexadeca-4,6,12,14-tetraenoyl]-L-tyrosyl-[ACP] = (3E,5S)-3-[(2E,4E,8S,10E,12Z)-1-hydroxy-4,8-dimethyltetradeca-2,4,10,12-tetraen-1-ylidene]-5-[(4-hydroxyphenyl)methyl]pyrrolidine-2,4-dione + holo-[ACP] + H(+). The protein operates within mycotoxin biosynthesis. Functionally, trans-enoyl reductase; part of the gene cluster that mediates the biosynthesis of ilicicolin H, a 4-hydroxy-2-pyridonealkaloid that has potent and broad antifungal activities by inhibiting the mitochondrial respiration chain. IccB collaborates with the hybrid PKS-NRPS synthetase iccA to assemble the backbone of ilicicolin H. The PKS portion of iccA and trans-acting enoyl reductase iccB work together to construct an octaketide, and two methyl groups are introduced by the MT domain of iccA during the chain assembly. The nascent chain is then condensed with tyrosine, catalyzed by the iliA C domain, and the resulting PKS-NRPS hybrid is offloaded by the iliA RED domain to form an advanced tetramic acid intermediate. The biosynthesis of ilicicolin H starts with formation of the tetramic acid by the hybrid PKS-NRPS synthetase iccA with the partnering trans-enoyl reductase iccB since iccA lacks a designated enoylreductase (ER) domain. The cytochrome P450 monooxygenase iccC then catalyzes the ring expansion of the tetramate to the acyclic 2-pyridone. The pericyclase iccD further converts the acyclic 2-pyridone into 8-epi-ilicicolin H. Finally, the epimerase iccE converts 8-epi-ilicicolin H into ilicicolin H via epimerization. IccA to iccE are sufficient for ilicicolin H biosynthesis and the roles of the remaining enzymes, iccF, iccG and iccH within the pathway have still to be determined. The chain is Trans-enoyl reductase iccB from Talaromyces variabilis (Penicillium variabile).